We begin with the raw amino-acid sequence, 475 residues long: Gamma-aminobutyric acid receptor subunit gamma-2 (475 aa).

Residues 1–39 (MSSPNIWSTGSSVYSTPVFSQKMTVWILLLLSLYPGFTS) form the signal peptide. Residues 40–275 (QKSDDDYEDY…FDLSRRMGYF (236 aa)) lie on the Extracellular side of the membrane. 2 N-linked (GlcNAc...) asparagine glycosylation sites follow: asparagine 52 and asparagine 129. Residues cysteine 190 and cysteine 204 are joined by a disulfide bond. N-linked (GlcNAc...) asparagine glycosylation occurs at asparagine 247. A helical membrane pass occupies residues 276 to 296 (TIQTYIPCTLIVVLSWVSFWI). Residues 297-302 (NKDAVP) are Cytoplasmic-facing. A helical transmembrane segment spans residues 303-322 (ARTSLGITTVLTMTTLSTIA). The Extracellular segment spans residues 323-334 (RKSLPKVSYVTA). A helical membrane pass occupies residues 335–359 (MDLFVSVCFIFVFSALVEYGTLHYF). The Cytoplasmic portion of the chain corresponds to 360–451 (VSNRKPSKDK…IHIRIAKMDS (92 aa)). An interaction with GABARAP region spans residues 433 to 450 (RTGAWRHGRIHIRIAKMD). Residues 452–472 (YARIFFPTAFCLFNLVYWVSY) form a helical membrane-spanning segment. The Extracellular portion of the chain corresponds to 473–475 (LYL).

This sequence belongs to the ligand-gated ion channel (TC 1.A.9) family. Gamma-aminobutyric acid receptor (TC 1.A.9.5) subfamily. GABRG2 sub-subfamily. As to quaternary structure, heteropentamer, formed by a combination of alpha (GABRA1-6), beta (GABRB1-3), gamma (GABRG1-3), delta (GABRD), epsilon (GABRE), rho (GABRR1-3), pi (GABRP) and theta (GABRQ) chains, each subunit exhibiting distinct physiological and pharmacological properties. Interacts with GABARAP. Interacts with KIF21B. Identified in a complex of 720 kDa composed of LHFPL4, NLGN2, GABRA1, GABRB2, GABRG2 and GABRB3. Interacts with LHFPL4. Interacts with SHISA7; interaction leads to the regulation of GABA(A) receptor trafficking, channel deactivation kinetics and pharmacology. Palmitoylated by ZDHHC3/GODZ; required for the accumulation of GABA(A) receptors at the postsynaptic membrane of inhibitory GABAergic synapses.

The protein localises to the postsynaptic cell membrane. The protein resides in the cell membrane. It is found in the cell projection. It localises to the dendrite. Its subcellular location is the cytoplasmic vesicle membrane. It carries out the reaction chloride(in) = chloride(out). With respect to regulation, allosterically activated by benzodiazepines. Activated by pentobarbital. Potentiated by etomidate, propofol, pregnanolone. Inhibited by the antagonist bicuculline. Inhibited by zinc ions. Potentiated by histamine. Its function is as follows. Gamma subunit of the heteropentameric ligand-gated chloride channel gated by gamma-aminobutyric acid (GABA), a major inhibitory neurotransmitter in the brain. GABA-gated chloride channels, also named GABA(A) receptors (GABAAR), consist of five subunits arranged around a central pore and contain GABA active binding site(s) located at the alpha and beta subunit interface(s). When activated by GABA, GABAARs selectively allow the flow of chloride anions across the cell membrane down their electrochemical gradient. Gamma-2/GABRG2-containing GABAARs are found at both synaptic and extrasynaptic sites. Chloride influx into the postsynaptic neuron following GABAAR opening decreases the neuron ability to generate a new action potential, thereby reducing nerve transmission. GABAARs containing alpha-1 and beta-2 or -3 subunits exhibit synaptogenic activity; the gamma-2 subunit being necessary but not sufficient to induce rapid synaptic contacts formation. Extrasynaptic gamma-2-containing receptors contribute to the tonic GABAergic inhibition. GABAARs function also as histamine receptor where histamine binds at the interface of two neighboring beta subunits and potentiates GABA response in a gamma-2 subunit-controlled manner. The chain is Gamma-aminobutyric acid receptor subunit gamma-2 from Homo sapiens (Human).